The chain runs to 446 residues: Ribosomal protein uS12 methylthiotransferase RimO (446 aa).

An MTTase N-terminal domain is found at 9–121 (PKVGFVSLGC…VLDAIHAALP (113 aa)). [4Fe-4S] cluster-binding residues include Cys18, Cys54, Cys83, Cys152, Cys156, and Cys159. The Radical SAM core domain maps to 138–375 (LTPPHYAYLK…MAVQEAISRQ (238 aa)). Residues 378–445 (QRRVGQRQRV…AHDLYGMVVS (68 aa)) form the TRAM domain.

This sequence belongs to the methylthiotransferase family. RimO subfamily. [4Fe-4S] cluster is required as a cofactor.

The protein resides in the cytoplasm. It catalyses the reaction L-aspartate(89)-[ribosomal protein uS12]-hydrogen + (sulfur carrier)-SH + AH2 + 2 S-adenosyl-L-methionine = 3-methylsulfanyl-L-aspartate(89)-[ribosomal protein uS12]-hydrogen + (sulfur carrier)-H + 5'-deoxyadenosine + L-methionine + A + S-adenosyl-L-homocysteine + 2 H(+). Catalyzes the methylthiolation of an aspartic acid residue of ribosomal protein uS12. The chain is Ribosomal protein uS12 methylthiotransferase RimO from Acidithiobacillus ferrooxidans (strain ATCC 23270 / DSM 14882 / CIP 104768 / NCIMB 8455) (Ferrobacillus ferrooxidans (strain ATCC 23270)).